The sequence spans 257 residues: Zinc transporter ZupT (257 aa).

3 consecutive transmembrane segments (helical) span residues 5–25 (LILT…GVLG), 32–52 (LLAF…LMEM), and 61–81 (GMSP…YFGL). 2 residues coordinate Fe(2+): Asn120 and Glu123. Zn(2+)-binding residues include Glu123 and His148. 4 consecutive transmembrane segments (helical) span residues 137 to 157 (LGFG…LAVA), 171 to 191 (ILWA…AWLI), 195 to 215 (MISP…MVAL), and 236 to 256 (GVLC…TAGI). 3 residues coordinate Fe(2+): Asn149, Glu152, and Glu181. Glu152 is a binding site for Zn(2+).

The protein belongs to the ZIP transporter (TC 2.A.5) family. ZupT subfamily.

The protein resides in the cell inner membrane. It carries out the reaction Zn(2+)(in) = Zn(2+)(out). Functionally, mediates zinc uptake. May also transport other divalent cations. This Escherichia coli O45:K1 (strain S88 / ExPEC) protein is Zinc transporter ZupT.